Here is a 354-residue protein sequence, read N- to C-terminus: Green-sensitive opsin-3 (354 aa).

The Extracellular segment spans residues 1–39 (MSGLNGFEGDNFYIPMSNRTGLVRDPFVYEQYYLAEPWQ). A glycan (N-linked (GlcNAc...) asparagine) is linked at Asn18. Residues 40 to 64 (FKLLACYMFFLICLGLPINGFTLFV) traverse the membrane as a helical segment. Residues 65-76 (TAQHKKLQQPLN) lie on the Cytoplasmic side of the membrane. Residues 77–102 (FILVNLAVAGMIMVCFGFTITISSAV) traverse the membrane as a helical segment. The Extracellular portion of the chain corresponds to 103 to 116 (NGYFYFGPTACAIE). Residues Cys113 and Cys190 are joined by a disulfide bond. A helical transmembrane segment spans residues 117-136 (GFMATLGGEVALWSLVVLAI). Topologically, residues 137-155 (ERYIVVCKPMGSFKFSASH) are cytoplasmic. Residues 156-179 (ALGGIGFTWFMAMTCAAPPLVGWS) form a helical membrane-spanning segment. At 180–205 (RYIPEGLQCSCGPDYYTLNPKYNNES) the chain is on the extracellular side. Residue Asn203 is glycosylated (N-linked (GlcNAc...) asparagine). The helical transmembrane segment at 206–233 (YVIYMFVVHFIVPVTVIFFTYGRLVCTV) threads the bilayer. Residues 234-255 (KSAAAAQQDSASTQKAEKEVTR) are Cytoplasmic-facing. A helical membrane pass occupies residues 256 to 279 (MVILMVVGFLVAWTPYATVAAWIF). The Extracellular segment spans residues 280–287 (FNKGAAFT). The helical transmembrane segment at 288–312 (AQFMAVPAFFSKSSALFNPIIYVLL) threads the bilayer. N6-(retinylidene)lysine is present on Lys299. Topologically, residues 313–354 (NKQFRNCMLTTLFCGKNPLGDEESSTVSTKTEVSTVSSVSPA) are cytoplasmic.

It belongs to the G-protein coupled receptor 1 family. Opsin subfamily. As to expression, the color pigments are found in the cone photoreceptor cells.

It localises to the membrane. Functionally, visual pigments are the light-absorbing molecules that mediate vision. They consist of an apoprotein, opsin, covalently linked to cis-retinal. The chain is Green-sensitive opsin-3 (RH11) from Psalidodon fasciatus (Banded astyanax).